Here is a 137-residue protein sequence, read N- to C-terminus: Large ribosomal subunit protein uL16 (137 aa).

The protein belongs to the universal ribosomal protein uL16 family. Part of the 50S ribosomal subunit.

In terms of biological role, binds 23S rRNA and is also seen to make contacts with the A and possibly P site tRNAs. This Rhodopseudomonas palustris (strain HaA2) protein is Large ribosomal subunit protein uL16.